The primary structure comprises 456 residues: Phosphomethylpyrimidine synthase (456 aa).

Residues N80, M109, Y139, H175, 195-197, 236-239, and E275 contribute to the substrate site; these read SRG and DSLR. H279 contacts Zn(2+). Y302 contacts substrate. H343 contacts Zn(2+). Residues C423, C426, and C431 each coordinate [4Fe-4S] cluster.

It belongs to the ThiC family. [4Fe-4S] cluster is required as a cofactor.

The catalysed reaction is 5-amino-1-(5-phospho-beta-D-ribosyl)imidazole + S-adenosyl-L-methionine = 4-amino-2-methyl-5-(phosphooxymethyl)pyrimidine + CO + 5'-deoxyadenosine + formate + L-methionine + 3 H(+). It participates in cofactor biosynthesis; thiamine diphosphate biosynthesis. Catalyzes the synthesis of the hydroxymethylpyrimidine phosphate (HMP-P) moiety of thiamine from aminoimidazole ribotide (AIR) in a radical S-adenosyl-L-methionine (SAM)-dependent reaction. This is Phosphomethylpyrimidine synthase from Prochlorococcus marinus (strain MIT 9515).